The sequence spans 744 residues: CCR4-NOT transcription complex subunit 10 (744 aa).

Residues 1-16 (MAADKPADQGAEKHEG) are compositionally biased toward basic and acidic residues. Positions 1 to 25 (MAADKPADQGAEKHEGTGQSSGITD) are disordered. The residue at position 2 (Ala-2) is an N-acetylalanine. Residues 74–107 (KSNQTTTDNLRQTLNQLKNQVHSAVEEMDGLDDV) are a coiled coil. The segment covering 183–199 (NNNKNGKNETGNNNNKD) has biased composition (low complexity). Disordered stretches follow at residues 183–204 (NNNK…SNHK), 477–521 (QDPK…PPSS), and 602–634 (VSLG…PQCY). Residues 484 to 495 (GAKNSNQLGGNT) show a composition bias toward polar residues. Residues 496–506 (ESSESSETCSS) show a composition bias toward low complexity. The span at 602–612 (VSLGISSNEQD) shows a compositional bias: polar residues.

It belongs to the CNOT10 family. In terms of assembly, component of the CCR4-NOT complex; distinct complexes seem to exist that differ in the participation of probably mutually exclusive catalytic subunits. CNOT10 and CNOT11 form a subcomplex docked to the CNOT1 scaffold.

Its subcellular location is the cytoplasm. The protein localises to the nucleus. Its function is as follows. Component of the CCR4-NOT complex which is one of the major cellular mRNA deadenylases and is linked to various cellular processes including bulk mRNA degradation, miRNA-mediated repression, translational repression during translational initiation and general transcription regulation. Additional complex functions may be a consequence of its influence on mRNA expression. Is not required for association of CNOT7 to the CCR4-NOT complex. The protein is CCR4-NOT transcription complex subunit 10 (CNOT10) of Homo sapiens (Human).